The chain runs to 406 residues: MARALLIVLDSVGIGGAPDADRYGDAGSDTVGHIAEACAAGRGDRPGLRAGPLHLPNLAALGLGLACEGATGRVPPGLAPEGPVRALWGHAVETAAGKDTPSGHWEIAGVPVREAWGHFPDTQPAFPAELTAALVARAGLPGILGDCHASGTAIIEALGAEHVRTGKPICYTSADSVFQIAAHEEAFGLERLYETCRIAREVCDPYRVGRVIARPFLGSAAEGFRRTSHRKDFSVAPPAGTLLDGLETAGRAVVSVGKIGDIFAHRATGREIKPAGNAACLDAALDAFAGLPEGGFVFLNLVDFDTEHGHRRDVPGYAAELEAFDRRLPEIQAVLKPGDLCVITADHGNDPTWTGTEHTREQVPVLAFGPGLAPRALGRRESFADMGASVAAHLGLPPLGAGQAWW.

Residues Asp10, Asp305, His310, Asp346, His347, and His358 each contribute to the Mn(2+) site.

The protein belongs to the phosphopentomutase family. Requires Mn(2+) as cofactor.

It is found in the cytoplasm. The enzyme catalyses 2-deoxy-alpha-D-ribose 1-phosphate = 2-deoxy-D-ribose 5-phosphate. The catalysed reaction is alpha-D-ribose 1-phosphate = D-ribose 5-phosphate. Its pathway is carbohydrate degradation; 2-deoxy-D-ribose 1-phosphate degradation; D-glyceraldehyde 3-phosphate and acetaldehyde from 2-deoxy-alpha-D-ribose 1-phosphate: step 1/2. Functionally, isomerase that catalyzes the conversion of deoxy-ribose 1-phosphate (dRib-1-P) and ribose 1-phosphate (Rib-1-P) to deoxy-ribose 5-phosphate (dRib-5-P) and ribose 5-phosphate (Rib-5-P), respectively. This is Phosphopentomutase from Methylorubrum extorquens (strain PA1) (Methylobacterium extorquens).